Here is a 355-residue protein sequence, read N- to C-terminus: NADH-quinone oxidoreductase subunit H (355 aa).

Helical transmembrane passes span 25 to 45 (VVRI…LILW), 91 to 111 (WLYL…WAVI), 126 to 146 (LLYA…AGWA), 170 to 190 (MGFA…SEIV), 205 to 225 (FLSW…ISGI), 253 to 273 (MAFA…SALA), 290 to 310 (FIPG…VFIW), and 330 to 350 (VFLP…MSPL).

This sequence belongs to the complex I subunit 1 family. NDH-1 is composed of 14 different subunits. Subunits NuoA, H, J, K, L, M, N constitute the membrane sector of the complex.

Its subcellular location is the cell inner membrane. The enzyme catalyses a quinone + NADH + 5 H(+)(in) = a quinol + NAD(+) + 4 H(+)(out). NDH-1 shuttles electrons from NADH, via FMN and iron-sulfur (Fe-S) centers, to quinones in the respiratory chain. The immediate electron acceptor for the enzyme in this species is believed to be ubiquinone. Couples the redox reaction to proton translocation (for every two electrons transferred, four hydrogen ions are translocated across the cytoplasmic membrane), and thus conserves the redox energy in a proton gradient. This subunit may bind ubiquinone. In Burkholderia cenocepacia (strain HI2424), this protein is NADH-quinone oxidoreductase subunit H.